The sequence spans 513 residues: Cytochrome P450 72A552 (513 aa).

A helical transmembrane segment spans residues 2–22 (EISVASVTVSVVIAVVTWWVW). Heme is bound at residue C460.

This sequence belongs to the cytochrome P450 family. Heme serves as cofactor.

It localises to the membrane. It catalyses the reaction oleanolate + reduced [NADPH--hemoprotein reductase] + O2 = hederagenin + oxidized [NADPH--hemoprotein reductase] + H2O + H(+). Functionally, catalyzes the oxidation of oleanolate at the C-23 position to form hederagenin. This is Cytochrome P450 72A552 from Barbarea vulgaris (Yellow rocket).